The primary structure comprises 342 residues: Polygalacturonase inhibitor 3 (342 aa).

The N-terminal stretch at 1–29 (MTQFNIPVTMSSSLSIILVILVSLRTALS) is a signal peptide. 2 disulfides stabilise this stretch: Cys-32-Cys-62 and Cys-63-Cys-72. An N-linked (GlcNAc...) asparagine glycan is attached at Asn-64. LRR repeat units lie at residues 82–107 (NNLDLSGHNLPKPYPIPSSLANLPYL), 108–132 (NFLYIGGINNLVGPIPPAIAKLTQL), 133–156 (HYLYITHTNVSGAIPDFLSQIKTL), 157–180 (VTLDFSYNALSGTLPPSISSLPNL), 181–205 (VGITFDGNRISGAIPDSYGSFSKLF), 206–228 (TSMTISRNRLTGKIPPTFANLNL), 229–252 (AFVDLSRNMLQGDASVLFGSDKNT), 253–275 (QKIHLAKNSLDFDLEKVGLSKNL), 276–299 (NGLDLRNNRIYGTLPQGLTQLKFL), and 300–319 (HSLNVSFNNLCGEIPQGGNL). Asn-141 carries N-linked (GlcNAc...) asparagine glycosylation. N-linked (GlcNAc...) asparagine glycosylation occurs at Asn-303. 2 cysteine pairs are disulfide-bonded: Cys-310–Cys-332 and Cys-334–Cys-341.

Belongs to the polygalacturonase-inhibiting protein family. Found in suspension-cultured cells and to a lesser extent in hypocotyls, leaves and flowers.

Its subcellular location is the secreted. The protein localises to the cell wall. The protein resides in the membrane. Its function is as follows. Inhibitor of fungal polygalacturonase. It is an important factor for plant resistance to phytopathogenic fungi. This Phaseolus vulgaris (Kidney bean) protein is Polygalacturonase inhibitor 3 (PGIP3).